Reading from the N-terminus, the 103-residue chain is Small ribosomal subunit protein eS24 (103 aa).

Belongs to the eukaryotic ribosomal protein eS24 family.

The sequence is that of Small ribosomal subunit protein eS24 from Methanococcus maripaludis (strain C6 / ATCC BAA-1332).